We begin with the raw amino-acid sequence, 209 residues long: Ephrin-A2 (209 aa).

Positions 1-20 (MAPAQRPLLPLLLLLLPLRA) are cleaved as a signal peptide. Residues 30–170 (ADRYAVYWNR…RLKVYVRPTN (141 aa)) form the Ephrin RBD domain. An N-linked (GlcNAc...) asparagine glycan is attached at Asn38. 2 cysteine pairs are disulfide-bonded: Cys69–Cys110 and Cys98–Cys159. N-linked (GlcNAc...) asparagine glycans are attached at residues Asn170 and Asn184. Asn184 is lipidated: GPI-anchor amidated asparagine. The propeptide at 185–209 (SSCSGLGGCHLFLTTVPVLWSLLGS) is removed in mature form.

This sequence belongs to the ephrin family. As to quaternary structure, binds to the receptor tyrosine kinases EPHA3, EPHA4 and EPHA5. Interacts with EPHA8; activates EPHA8. In terms of tissue distribution, expressed in myogenic progenitor cells.

The protein resides in the cell membrane. Its function is as follows. Cell surface GPI-bound ligand for Eph receptors, a family of receptor tyrosine kinases which are crucial for migration, repulsion and adhesion during neuronal, vascular and epithelial development. Binds promiscuously Eph receptors residing on adjacent cells, leading to contact-dependent bidirectional signaling into neighboring cells. The signaling pathway downstream of the receptor is referred to as forward signaling while the signaling pathway downstream of the ephrin ligand is referred to as reverse signaling. With the EPHA2 receptor may play a role in bone remodeling through regulation of osteoclastogenesis and osteoblastogenesis. This is Ephrin-A2 (Efna2) from Mus musculus (Mouse).